Consider the following 292-residue polypeptide: Coatomer subunit epsilon-1 (292 aa).

It belongs to the COPE family. Oligomeric complex that consists of at least the alpha, beta, beta', gamma, delta, epsilon and zeta subunits.

It localises to the cytoplasm. Its subcellular location is the golgi apparatus membrane. The protein localises to the cytoplasmic vesicle. It is found in the COPI-coated vesicle membrane. The coatomer is a cytosolic protein complex that binds to dilysine motifs and reversibly associates with Golgi non-clathrin-coated vesicles, which further mediate biosynthetic protein transport from the ER, via the Golgi up to the trans Golgi network. The coatomer complex is required for budding from Golgi membranes, and is essential for the retrograde Golgi-to-ER transport of dilysine-tagged proteins. In Arabidopsis thaliana (Mouse-ear cress), this protein is Coatomer subunit epsilon-1.